The sequence spans 142 residues: Transcription antitermination protein NusB (142 aa).

The protein belongs to the NusB family.

In terms of biological role, involved in transcription antitermination. Required for transcription of ribosomal RNA (rRNA) genes. Binds specifically to the boxA antiterminator sequence of the ribosomal RNA (rrn) operons. The polypeptide is Transcription antitermination protein NusB (Thermobifida fusca (strain YX)).